Consider the following 218-residue polypeptide: Eukaryotic translation initiation factor 4E-1 (218 aa).

A compositionally biased stretch (basic and acidic residues) spans 1–11; that stretch reads MQTEQPPKESQ. Disordered stretches follow at residues 1-20 and 198-218; these read MQTE…SEPQ and FSAH…RMSV. Residues 206–218 are compositionally biased toward polar residues; that stretch reads KSGSTRAKTRMSV.

The protein belongs to the eukaryotic initiation factor 4E family. As to quaternary structure, eIF4F is a multi-subunit complex, the composition of which varies with external and internal environmental conditions. It is composed of at least eIF4A, eIF4E and eIF4G. eIF4E is also known to interact with other partners.

Recognizes and binds the 7-methylguanosine-containing mRNA cap during an early step in the initiation of protein synthesis and facilitates ribosome binding by inducing the unwinding of the mRNAs secondary structures. The polypeptide is Eukaryotic translation initiation factor 4E-1 (tif451) (Schizosaccharomyces pombe (strain 972 / ATCC 24843) (Fission yeast)).